A 55-amino-acid chain; its full sequence is Neurotoxin B-IV (55 aa).

Proline 10 bears the Hydroxyproline mark. Disulfide bonds link cysteine 12/cysteine 52, cysteine 16/cysteine 48, cysteine 23/cysteine 41, and cysteine 26/cysteine 37.

It belongs to the worm B-toxin family.

Its subcellular location is the secreted. Its function is as follows. This toxin increases the excitability of nerves by delaying the inactivation of the voltage-gated sodium channel (Nav). Only acts on some crustacean. Is more abundant, but 15-fold less toxic than neurotoxin B-II. The chain is Neurotoxin B-IV from Cerebratulus lacteus (Milky ribbon worm).